Here is a 109-residue protein sequence, read N- to C-terminus: Large ribosomal subunit protein uL22 (109 aa).

The protein belongs to the universal ribosomal protein uL22 family. In terms of assembly, part of the 50S ribosomal subunit.

Functionally, this protein binds specifically to 23S rRNA; its binding is stimulated by other ribosomal proteins, e.g. L4, L17, and L20. It is important during the early stages of 50S assembly. It makes multiple contacts with different domains of the 23S rRNA in the assembled 50S subunit and ribosome. Its function is as follows. The globular domain of the protein is located near the polypeptide exit tunnel on the outside of the subunit, while an extended beta-hairpin is found that lines the wall of the exit tunnel in the center of the 70S ribosome. The chain is Large ribosomal subunit protein uL22 from Laribacter hongkongensis (strain HLHK9).